A 128-amino-acid chain; its full sequence is Cytochrome c' (128 aa).

Positions 13, 17, 69, 70, 118, 121, and 122 each coordinate heme c.

In terms of assembly, homodimer. In terms of processing, binds 1 heme c group covalently per subunit.

In terms of biological role, cytochrome c' is the most widely occurring bacterial c-type cytochrome. Cytochromes c' are high-spin proteins and the heme has no sixth ligand. Their exact function is not known. This is Cytochrome c' from Magnetospirillum molischianum (Rhodospirillum molischianum).